Here is a 326-residue protein sequence, read N- to C-terminus: Glutaminase 2 (326 aa).

Substrate-binding residues include Ser-73, Asn-125, Glu-169, Asn-176, Tyr-200, Tyr-252, and Val-270.

This sequence belongs to the glutaminase family. In terms of assembly, homotetramer.

The catalysed reaction is L-glutamine + H2O = L-glutamate + NH4(+). The chain is Glutaminase 2 from Bacillus cereus (strain ATCC 14579 / DSM 31 / CCUG 7414 / JCM 2152 / NBRC 15305 / NCIMB 9373 / NCTC 2599 / NRRL B-3711).